The primary structure comprises 133 residues: UPF0102 protein Anae109_1947 (133 aa).

This sequence belongs to the UPF0102 family.

The chain is UPF0102 protein Anae109_1947 from Anaeromyxobacter sp. (strain Fw109-5).